A 333-amino-acid chain; its full sequence is Adenosine deaminase (333 aa).

H12 and H14 together coordinate Zn(2+). Substrate-binding residues include H14, D16, and G170. H197 is a Zn(2+) binding site. Residue E200 is the Proton donor of the active site. D278 contacts Zn(2+). A substrate-binding site is contributed by D279.

Belongs to the metallo-dependent hydrolases superfamily. Adenosine and AMP deaminases family. Adenosine deaminase subfamily. Zn(2+) is required as a cofactor.

The enzyme catalyses adenosine + H2O + H(+) = inosine + NH4(+). It carries out the reaction 2'-deoxyadenosine + H2O + H(+) = 2'-deoxyinosine + NH4(+). Functionally, catalyzes the hydrolytic deamination of adenosine and 2-deoxyadenosine. In Klebsiella pneumoniae subsp. pneumoniae (strain ATCC 700721 / MGH 78578), this protein is Adenosine deaminase.